A 198-amino-acid chain; its full sequence is MEHYISLFVKSVFIENMALSFFLGMCTFLAVSKKVSTSFGLGIAVIVVLGIAVPVNQLVYTHILKENALVDGVDLSFLNFITFIGVIAALVQILEMFLDKFVPSLYSALGIFLPLITVNCAIFGGVSFMVQREYNFTESVVYGIGAGTGWMLAIVALAGLTEKMKYADVPAGLRGLGITFITVGLMALGFMSFSGIQL.

Helical transmembrane passes span 11–31 (SVFI…FLAV), 35–55 (VSTS…AVPV), 77–97 (FLNF…LEMF), 110–130 (GIFL…SFMV), 140–160 (VVYG…LAGL), and 176–196 (LGIT…FSGI).

Belongs to the NqrDE/RnfAE family. As to quaternary structure, composed of six subunits; NqrA, NqrB, NqrC, NqrD, NqrE and NqrF.

It is found in the cell inner membrane. The catalysed reaction is a ubiquinone + n Na(+)(in) + NADH + H(+) = a ubiquinol + n Na(+)(out) + NAD(+). In terms of biological role, NQR complex catalyzes the reduction of ubiquinone-1 to ubiquinol by two successive reactions, coupled with the transport of Na(+) ions from the cytoplasm to the periplasm. NqrA to NqrE are probably involved in the second step, the conversion of ubisemiquinone to ubiquinol. The protein is Na(+)-translocating NADH-quinone reductase subunit E of Actinobacillus succinogenes (strain ATCC 55618 / DSM 22257 / CCUG 43843 / 130Z).